We begin with the raw amino-acid sequence, 312 residues long: Aspartate carbamoyltransferase catalytic subunit (312 aa).

The carbamoyl phosphate site is built by arginine 58 and threonine 59. Lysine 86 serves as a coordination point for L-aspartate. Positions 108, 136, and 139 each coordinate carbamoyl phosphate. Arginine 169 and arginine 223 together coordinate L-aspartate. Residues glycine 264 and proline 265 each coordinate carbamoyl phosphate.

This sequence belongs to the aspartate/ornithine carbamoyltransferase superfamily. ATCase family. Heterododecamer (2C3:3R2) of six catalytic PyrB chains organized as two trimers (C3), and six regulatory PyrI chains organized as three dimers (R2).

It carries out the reaction carbamoyl phosphate + L-aspartate = N-carbamoyl-L-aspartate + phosphate + H(+). It participates in pyrimidine metabolism; UMP biosynthesis via de novo pathway; (S)-dihydroorotate from bicarbonate: step 2/3. Catalyzes the condensation of carbamoyl phosphate and aspartate to form carbamoyl aspartate and inorganic phosphate, the committed step in the de novo pyrimidine nucleotide biosynthesis pathway. The sequence is that of Aspartate carbamoyltransferase catalytic subunit from Heliobacterium modesticaldum (strain ATCC 51547 / Ice1).